The sequence spans 390 residues: Flap endonuclease 1 (390 aa).

Positions 1 to 111 (MGIKGLAKLL…GELLKRREKR (111 aa)) are N-domain. Asp-34 is a binding site for Mg(2+). DNA-binding residues include Arg-47 and Arg-77. 5 residues coordinate Mg(2+): Asp-93, Glu-165, Glu-167, Asp-186, and Asp-188. The I-domain stretch occupies residues 129–260 (EQDKQSKRLV…KTALKLIREH (132 aa)). DNA is bound at residue Glu-165. 2 residues coordinate DNA: Gly-238 and Asp-240. Residue Asp-240 coordinates Mg(2+). The interval 342–390 (KPQSRMDSFFKVKANPEGDKKKAEKRKAELAASRGKGKKGKGGGGFKKK) is disordered. The segment at 343-351 (PQSRMDSFF) is interaction with PCNA. A compositionally biased stretch (basic and acidic residues) spans 349–370 (SFFKVKANPEGDKKKAEKRKAE). The span at 376-390 (GKGKKGKGGGGFKKK) shows a compositional bias: basic residues.

It belongs to the XPG/RAD2 endonuclease family. FEN1 subfamily. Interacts with PCNA. Three molecules of FEN1 bind to one PCNA trimer with each molecule binding to one PCNA monomer. PCNA stimulates the nuclease activity without altering cleavage specificity. The cofactor is Mg(2+). In terms of processing, phosphorylated. Phosphorylation upon DNA damage induces relocalization to the nuclear plasma.

It is found in the nucleus. Its subcellular location is the nucleolus. The protein localises to the nucleoplasm. The protein resides in the mitochondrion. Functionally, structure-specific nuclease with 5'-flap endonuclease and 5'-3' exonuclease activities involved in DNA replication and repair. During DNA replication, cleaves the 5'-overhanging flap structure that is generated by displacement synthesis when DNA polymerase encounters the 5'-end of a downstream Okazaki fragment. It enters the flap from the 5'-end and then tracks to cleave the flap base, leaving a nick for ligation. Also involved in the long patch base excision repair (LP-BER) pathway, by cleaving within the apurinic/apyrimidinic (AP) site-terminated flap. Acts as a genome stabilization factor that prevents flaps from equilibrating into structures that lead to duplications and deletions. Also possesses 5'-3' exonuclease activity on nicked or gapped double-stranded DNA, and exhibits RNase H activity. Also involved in replication and repair of rDNA and in repairing mitochondrial DNA. In Thalassiosira pseudonana (Marine diatom), this protein is Flap endonuclease 1.